The following is a 181-amino-acid chain: Nedd8-conjugating enzyme UbcE2M (181 aa).

Interaction with Uba3 regions lie at residues 4 to 7 and 24 to 54; these read LFTL and ASAA…PNDL. The UBC core domain occupies 26–170; that stretch reads AAQLRIQKDI…VKKAMRGGCV (145 aa). The Glycyl thioester intermediate role is filled by Cys108.

The protein belongs to the ubiquitin-conjugating enzyme family. UBC12 subfamily. In terms of assembly, interacts with Uba3. As to expression, expressed in the wing disk.

It catalyses the reaction [E1 NEDD8-activating enzyme]-S-[NEDD8 protein]-yl-L-cysteine + [E2 NEDD8-conjugating enzyme]-L-cysteine = [E1 NEDD8-activating enzyme]-L-cysteine + [E2 NEDD8-conjugating enzyme]-S-[NEDD8-protein]-yl-L-cysteine.. The protein operates within protein modification; protein neddylation. Its function is as follows. Accepts the ubiquitin-like protein Nedd8 from the Uba3-APP-BP1 E1 complex and catalyzes its covalent attachment to other proteins. Required for Cul1 and Cul3 neddylation. Negatively regulates full-length ci stability and hedgehog signaling. The sequence is that of Nedd8-conjugating enzyme UbcE2M from Drosophila melanogaster (Fruit fly).